A 516-amino-acid chain; its full sequence is Solute carrier family 49 member A3 (516 aa).

Positions 1-10 (MAGTMDRLED) are enriched in basic and acidic residues. The interval 1 to 22 (MAGTMDRLEDCNSPETSGTAGD) is disordered. The next 12 helical transmembrane spans lie at 34–54 (WVFL…WLSF), 74–94 (WLSL…IWVL), 104–124 (ILGA…CLPV), 139–159 (LCAL…ALWF), 170–190 (ISTM…PALV), 199–219 (MLGI…VCLW), 253–273 (VLLA…SALL), 289–309 (LCGA…GLYV), 321–341 (IGLC…QLQG), 344–364 (LALA…APVV), 382–402 (GLIF…LTAL), and 425–445 (VSLL…VIFF). The segment at 453–516 (EAESGGSSSP…EWAETMPRDV (64 aa)) is disordered. The span at 504 to 516 (GHSEWAETMPRDV) shows a compositional bias: basic and acidic residues.

It belongs to the major facilitator superfamily.

The protein localises to the membrane. This is Solute carrier family 49 member A3 (Slc49a3) from Mus musculus (Mouse).